The chain runs to 458 residues: Elongation factor 1-alpha (458 aa).

Gly2 is modified (n,N,N-trimethylglycine; by EFM7). N6,N6-dimethyllysine; by EFM7; alternate is present on Lys3. At Lys3 the chain carries N6-methyllysine; by EFM7; alternate. Positions 5 to 240 (KSHINVVVIG…DAIEQPSRPT (236 aa)) constitute a tr-type G domain. Residues 14 to 21 (GHVDSGKS) are G1. Residue Ser18 is modified to Phosphoserine. GTP is bound by residues Ser21 and Thr22. Lys30 carries the N6-methyllysine; by EFM1 modification. Positions 70–74 (GITID) are G2. Thr72 carries the post-translational modification Phosphothreonine. Lys79 is modified (N6,N6,N6-trimethyllysine; by EFM5). At Thr82 the chain carries Phosphothreonine. Residues 91–94 (DAPG) are G3. GTP-binding residues include Asn153, Lys154, and Asp156. Positions 153-156 (NKMD) are G4. The residue at position 163 (Ser163) is a Phosphoserine. GTP is bound by residues Ser192, Gly193, and Trp194. The G5 stretch occupies residues 192 to 194 (SGW). Residues Lys224, Lys242, and Lys253 each participate in a glycyl lysine isopeptide (Lys-Gly) (interchain with G-Cter in ubiquitin) cross-link. Thr259 bears the Phosphothreonine mark. A Glycyl lysine isopeptide (Lys-Gly) (interchain with G-Cter in ubiquitin) cross-link involves residue Lys271. Ser289 is subject to Phosphoserine. Lys316 is modified (N6,N6-dimethyllysine; by EFM4; alternate). At Lys316 the chain carries N6-methyllysine; by EFM4; alternate. Lys390 carries the N6-methyllysine; by EFM6 modification. Lys393 participates in a covalent cross-link: Glycyl lysine isopeptide (Lys-Gly) (interchain with G-Cter in ubiquitin). Ser414 carries the phosphoserine modification. Residue Thr430 is modified to Phosphothreonine. A Glycyl lysine isopeptide (Lys-Gly) (interchain with G-Cter in ubiquitin) cross-link involves residue Lys437. Lys458 carries the lysine methyl ester modification.

Belongs to the TRAFAC class translation factor GTPase superfamily. Classic translation factor GTPase family. EF-Tu/EF-1A subfamily. As to quaternary structure, the eukaryotic elongation factor 1 complex (eEF1) is probably a heterohexamer. Two trimeric complexes, each composed of eEF1A (TEF1 or TEF2), eEF1Balpha (EFB1) and eEF1Bgamma (CAM1 or TEF4), are probably dimerized via the eF1Bgamma subunits. Interacts with eEF1Balpha; the interaction is direct. Interacts with GCN2 (via C-terminus); this interaction is direct, occurs in amino acid-repleted cells, may be stabilized in a ribosome-dependent manner, reduces GCN2-mediated eIF-2-alpha phosphorylation and is lost in amino acid-starved cells and by uncharged tRNAs. Interacts with CEX1. Interacts with elongation factor 3 (YEF3 or HEF3). Interacts with NAP1. Interacts with SRV2. Interacts with chaperone ZPR1; the interaction is required for its proper folding. Binds to actin and forms a ternary complex with BNI1 and profilin. Interacts with the proteasome, probably via RPT1. Associates with ribosomes. In terms of processing, S-thiolated in response to oxidative stress, probably inhibiting the protein and causing a reduction in protein synthesis. Glutaminylated at Glu-45. An L-glutamine is linked to Glu-45 via the alpha amino group. This glutaminylation is yeast-specific and not essential for the normal functions of eEF1A. However, eEF1A glutaminylation slightly reduced growth under antibiotic-induced translational stress conditions.

It is found in the cytoplasm. Its subcellular location is the cytoskeleton. The protein operates within protein biosynthesis; polypeptide chain elongation. Inhibited by narciclasine. In terms of biological role, GTP-binding component of the eukaryotic elongation factor 1 complex (eEF1). In its active GTP-bound form, binds to and delivers aminoacyl-tRNA to the A-site of ribosomes during protein biosynthesis. In the presence of a correct codon-anticodon match between the aminoacyl-tRNA and the A-site codon of the ribosome-bound mRNA, the ribosome acts as a GTPase activator and the GTP is hydrolyzed. The inactive GDP-bound form leaves the ribosome and must be recycled by its guanine nucleotide exchange factor (GEF) (eEF1B subcomplex) before binding another molecule of aminoacyl-tRNA. Required for nuclear export of aminoacyl-tRNAs. May also be involved in translational quality control by targeting cotranslationally damaged proteins to the proteasome. Also exhibits actin filament-binding and -bundling activities and is involved in cytoskeleton organization. Plays a role as a negative regulator of GCN2 kinase activity by inhibiting GCN2-mediated eIF-2-alpha phosphorylation in amino acid-repleted cells. The sequence is that of Elongation factor 1-alpha (TEF1) from Saccharomyces cerevisiae (strain ATCC 204508 / S288c) (Baker's yeast).